Reading from the N-terminus, the 146-residue chain is Large ribosomal subunit protein uL15 (146 aa).

Positions Met1–Arg13 are enriched in basic and acidic residues. The disordered stretch occupies residues Met1–Tyr58. Gly residues-rich tracts occupy residues Arg21–Ala31 and Ser42–Gly52.

This sequence belongs to the universal ribosomal protein uL15 family. As to quaternary structure, part of the 50S ribosomal subunit.

Its function is as follows. Binds to the 23S rRNA. The chain is Large ribosomal subunit protein uL15 from Shouchella clausii (strain KSM-K16) (Alkalihalobacillus clausii).